Reading from the N-terminus, the 201-residue chain is Recombination protein RecR (201 aa).

Residues 57–72 (CKYCANFTNKDECDIC) form a C4-type zinc finger. Positions 80-176 (TKLMIVTTNE…QIYRIGFGIP (97 aa)) constitute a Toprim domain.

Belongs to the RecR family.

May play a role in DNA repair. It seems to be involved in an RecBC-independent recombinational process of DNA repair. It may act with RecF and RecO. In Ureaplasma parvum serovar 3 (strain ATCC 27815 / 27 / NCTC 11736), this protein is Recombination protein RecR.